The primary structure comprises 231 residues: Regulatory factor X-associated protein (231 aa).

The interval Met-1–Asp-163 is disordered. Residues Ala-50–Asp-65 are compositionally biased toward acidic residues. Positions Lys-115 to Lys-138 are enriched in basic residues. The short motif at Lys-123–Lys-138 is the Nuclear localization signal element. A Glycyl lysine isopeptide (Lys-Gly) (interchain with G-Cter in SUMO2) cross-link involves residue Lys-157.

As to quaternary structure, RFX consists of at least 3 different subunits; RFXAP, RFX5 and RFX-B/RFXANK; with each subunit representing a separate complementation group. RFX forms cooperative DNA binding complexes with X2BP and CBF/NF-Y. RFX associates with CIITA to form an active transcriptional complex. Post-translationally, phosphorylated.

It is found in the nucleus. In terms of biological role, part of the RFX complex that binds to the X-box of MHC II promoters. The sequence is that of Regulatory factor X-associated protein (Rfxap) from Mus musculus (Mouse).